The primary structure comprises 305 residues: Phosphoinositol dihydroceramide synthase (305 aa).

A signal peptide spans 1–23 (MPSKKETLTVIVIMALFLLLTAA). A lipid anchor (N-palmitoyl cysteine) is attached at cysteine 24. Residue cysteine 24 is the site of S-diacylglycerol cysteine attachment. A run of 6 helical transmembrane segments spans residues 41-61 (LFFAGLPTRKLAVALLPFAIF), 117-137 (VFAGIFYLCWVPVPILFGLCL), 149-169 (FALVFLFVNLIGFAGYYIHPA), 216-236 (FAAVPSLHAAYMVVALVYAII), 241-261 (WYVIALFSVIMAGIWGTAIYS), and 266-286 (IIDVLLGISCALLGWLFFEYG).

It is found in the membrane. It catalyses the reaction N-(2-hydroxy-fatty acyl)-dihydroceramide + a 1,2-diacyl-sn-glycero-3-phospho-(1D-myo-inositol) = inositol-1-phospho-N-(2-hydroxy-fatty acyl)-dihydroceramide + a 1,2-diacyl-sn-glycerol. In terms of biological role, catalyzes the addition of a phosphorylinositol group onto dihydroceramide to form phosphoinositol dihydroceramide (PI-DHC), an essential step in sphingolipid biosynthesis. This chain is Phosphoinositol dihydroceramide synthase, found in Bacteroides thetaiotaomicron (strain ATCC 29148 / DSM 2079 / JCM 5827 / CCUG 10774 / NCTC 10582 / VPI-5482 / E50).